The following is a 269-amino-acid chain: Interleukin-1 beta (269 aa).

A propeptide spans 1 to 116 (MAEVPELASE…TWDNEAYVHD (116 aa)) (removed in mature form; by CASP1). Residues 228–241 (FESAQFPNWYISTS) carry the Involved in interaction with TMED10 C-terminus motif.

The protein belongs to the IL-1 family. As to quaternary structure, monomer. In its precursor form, weakly interacts with full-length MEFV; the mature cytokine does not interact at all. Interacts with integrins ITGAV:ITGBV and ITGA5:ITGB1; integrin-binding is required for IL1B signaling. Interacts with cargo receptor TMED10; the interaction is direct and is required for the secretion of IL1B mature form. Interacts with HSP90AB1; the interaction facilitates cargo translocation into the ERGIC. Interacts with HSP90B1; the interaction facilitates cargo translocation into the ERGIC. Activation of the IL1B precursor involves a CASP1-catalyzed proteolytic cleavage. Processing and secretion are temporarily associated. Post-translationally, (Microbial infection) Cleavage by S.pyogenes cysteine protease SpeB promotes its activation independently of CASP1. In terms of tissue distribution, expressed in activated monocytes/macrophages (at protein level).

The protein localises to the cytoplasm. It localises to the cytosol. Its subcellular location is the secreted. The protein resides in the lysosome. It is found in the extracellular exosome. (Microbial infection) Cleavage by S.pyogenes cysteine protease SpeB promotes its activation independently of CASP1. SpeB-mediated maturation of IL1B plays a dual role depending on infection site: while IL1B inflammatory response prevents bacterial growth during invasive skin infections, it promotes streptococcal infection of the nasopharynx by disrupting colonization resistance mediated by the microbiota. In terms of biological role, potent pro-inflammatory cytokine. Initially discovered as the major endogenous pyrogen, induces prostaglandin synthesis, neutrophil influx and activation, T-cell activation and cytokine production, B-cell activation and antibody production, and fibroblast proliferation and collagen production. Promotes Th17 differentiation of T-cells. Synergizes with IL12/interleukin-12 to induce IFNG synthesis from T-helper 1 (Th1) cells. Plays a role in angiogenesis by inducing VEGF production synergistically with TNF and IL6. Involved in transduction of inflammation downstream of pyroptosis: its mature form is specifically released in the extracellular milieu by passing through the gasdermin-D (GSDMD) pore. Acts as a sensor of S.pyogenes infection in skin: cleaved and activated by pyogenes SpeB protease, leading to an inflammatory response that prevents bacterial growth during invasive skin infection. The protein is Interleukin-1 beta of Homo sapiens (Human).